Consider the following 44-residue polypeptide: U17-ctenitoxin-Co1a (44 aa).

4 disulfide bridges follow: cysteine 3/cysteine 20, cysteine 10/cysteine 26, cysteine 19/cysteine 40, and cysteine 28/cysteine 38.

Expressed by the venom gland.

It localises to the secreted. Omega-agatoxins are antagonists of voltage-sensitive calcium channels (Cav). Toxic to mice by intracerebroventricular injection. The chain is U17-ctenitoxin-Co1a from Ctenus ornatus (Brazilian spider).